Reading from the N-terminus, the 237-residue chain is tRNA1(Val) (adenine(37)-N6)-methyltransferase (237 aa).

The protein belongs to the methyltransferase superfamily. tRNA (adenine-N(6)-)-methyltransferase family.

The protein localises to the cytoplasm. It carries out the reaction adenosine(37) in tRNA1(Val) + S-adenosyl-L-methionine = N(6)-methyladenosine(37) in tRNA1(Val) + S-adenosyl-L-homocysteine + H(+). Functionally, specifically methylates the adenine in position 37 of tRNA(1)(Val) (anticodon cmo5UAC). In Bacteroides fragilis (strain YCH46), this protein is tRNA1(Val) (adenine(37)-N6)-methyltransferase.